Reading from the N-terminus, the 370-residue chain is NADH-quinone oxidoreductase subunit D (370 aa).

Belongs to the complex I 49 kDa subunit family. NDH-1 is composed of 14 different subunits. Subunits NuoB, C, D, E, F, and G constitute the peripheral sector of the complex.

It localises to the cell membrane. The catalysed reaction is a quinone + NADH + 5 H(+)(in) = a quinol + NAD(+) + 4 H(+)(out). Its function is as follows. NDH-1 shuttles electrons from NADH, via FMN and iron-sulfur (Fe-S) centers, to quinones in the respiratory chain. The immediate electron acceptor for the enzyme in this species is believed to be a menaquinone. Couples the redox reaction to proton translocation (for every two electrons transferred, four hydrogen ions are translocated across the cytoplasmic membrane), and thus conserves the redox energy in a proton gradient. The sequence is that of NADH-quinone oxidoreductase subunit D from Clostridium beijerinckii (strain ATCC 51743 / NCIMB 8052) (Clostridium acetobutylicum).